We begin with the raw amino-acid sequence, 138 residues long: Basic leucine zipper 8 (138 aa).

The interval 30 to 67 (NLPATSDDSSRTAEDNERKRRRKVSNRESARRSRMRKQ) is disordered. A compositionally biased stretch (basic and acidic residues) spans 37 to 47 (DSSRTAEDNER). A bZIP domain is found at 45-108 (NERKRRRKVS…EKVIEENMKL (64 aa)). A basic motif region spans residues 47–68 (RKRRRKVSNRESARRSRMRKQR). A Nuclear localization signal motif is present at residues 48–55 (KRRRKVSN). The leucine-zipper stretch occupies residues 73–87 (LWSMLVQLINKNKSL).

Belongs to the bZIP family. Homodimer.

Its subcellular location is the nucleus. The protein is Basic leucine zipper 8 of Arabidopsis thaliana (Mouse-ear cress).